The primary structure comprises 215 residues: Ependymin (215 aa).

A signal peptide spans 1–20 (MHTVKLLCVVFSCLCAVAWA). 2 N-linked (GlcNAc...) asparagine glycosylation sites follow: Asn-71 and Asn-94.

The protein belongs to the ependymin family. As to quaternary structure, forms disulfide-linked dimers. Post-translationally, binds calcium through the terminal sialic acids. As to expression, EPDs are synthesized in the meninx and secreted in the cerebrospinal fluid.

It localises to the secreted. In terms of biological role, may play a role in neural plasticity. May be involved during axon regeneration. In Cyprinus carpio (Common carp), this protein is Ependymin (epd).